We begin with the raw amino-acid sequence, 529 residues long: ATP synthase F(1) complex catalytic subunit beta, mitochondrial (529 aa).

The N-terminal 46 residues, 1–46 (MLSLVGRVASASASGALRGLNPLAALPQAHLLLRTAPAGVHPARDY), are a transit peptide targeting the mitochondrion. Residue Ser-106 is glycosylated (O-linked (GlcNAc) serine). Lys-124, Lys-133, and Lys-161 each carry N6-acetyllysine; alternate. Residues Lys-124, Lys-133, and Lys-161 each carry the N6-succinyllysine; alternate modification. Lys-198 bears the N6-acetyllysine mark. Gly-209, Val-210, Gly-211, Lys-212, Thr-213, and Val-214 together coordinate ADP. Gly-209 contributes to the ATP binding site. Positions 209, 210, 211, 212, and 213 each coordinate phosphate. Gly-211, Lys-212, Thr-213, and Val-214 together coordinate ATP. Thr-213 serves as a coordination point for Mg(2+). Residue Glu-238 coordinates Mg(2+). Residue Arg-239 participates in ATP binding. N6-acetyllysine; alternate occurs at positions 259 and 264. An N6-succinyllysine; alternate mark is found at Lys-259 and Lys-264. Thr-312 is subject to Phosphothreonine. Position 415 is a phosphoserine (Ser-415). At Lys-426 the chain carries N6-acetyllysine. Ser-433 bears the Phosphoserine mark. Residues Lys-480 and Lys-485 each carry the N6-acetyllysine modification. Lys-522 bears the N6-acetyllysine; alternate mark. Position 522 is an N6-succinyllysine; alternate (Lys-522). Position 529 is a phosphoserine (Ser-529).

Belongs to the ATPase alpha/beta chains family. In terms of assembly, homotrimer. Component of the ATP synthase complex composed at least of ATP5F1A/subunit alpha, ATP5F1B/subunit beta, ATP5MC1/subunit c (homooctomer), MT-ATP6/subunit a, MT-ATP8/subunit 8, ATP5ME/subunit e, ATP5MF/subunit f, ATP5MG/subunit g, ATP5MK/subunit k, ATP5MJ/subunit j, ATP5F1C/subunit gamma, ATP5F1D/subunit delta, ATP5F1E/subunit epsilon, ATP5PF/subunit F6, ATP5PB/subunit b, ATP5PD/subunit d, ATP5PO/subunit OSCP. ATP synthase complex consists of a soluble F(1) head domain (subunits alpha(3) and beta(3)) - the catalytic core - and a membrane F(0) domain - the membrane proton channel (subunits c, a, 8, e, f, g, k and j). These two domains are linked by a central stalk (subunits gamma, delta, and epsilon) rotating inside the F1 region and a stationary peripheral stalk (subunits F6, b, d, and OSCP). Interacts with PPIF. Interacts with BCL2L1 isoform BCL-X(L); the interaction mediates the association of BCL2L1 isoform BCL-X(L) with the mitochondrial membrane F(1)F(0) ATP synthase and enhances neurons metabolic efficiency. Interacts with CLN5 and PPT1. Interacts with S100A1; this interaction increases F1-ATPase activity. Interacts with MTLN. Interacts with TTC5/STRAP; the interaction results in decreased mitochondrial ATP production.

It is found in the mitochondrion inner membrane. The enzyme catalyses ATP + H2O + 4 H(+)(in) = ADP + phosphate + 5 H(+)(out). In terms of biological role, catalytic subunit beta, of the soluble F(1) head domain within the mitochondrial ATP synthase complex (F(1)F(0) ATP synthase or complex V) that produces ATP from ADP and phosphate inorganique in the presence of a proton gradient across the membrane which is generated by electron transport complexes of the respiratory chain. With the non-catalytic subunit alpha (ATP5F1A), forms the catalytic core in the F(1) domain. ATP synthase complex consist of two structural domains, F(1) - containing the extramembraneous catalytic core, and F(0) - containing the membrane proton channel, linked together by a central stalk and a peripheral stalk. During catalysis, ATP synthesis in the catalytic domain of F(1) is coupled via a rotary mechanism of the central stalk subunits to proton translocation. Functionally, catalytic subunit beta, of the mitochondrial membrane ATP synthase complex (F(1)F(0) ATP synthase or Complex V) that produces ATP from ADP in the presence of a proton gradient across the membrane which is generated by electron transport complexes of the respiratory chain. ATP synthase complex consist of a soluble F(1) head domain - the catalytic core - and a membrane F(1) domain - the membrane proton channel. These two domains are linked by a central stalk rotating inside the F(1) region and a stationary peripheral stalk. During catalysis, ATP synthesis in the catalytic domain of F(1) is coupled via a rotary mechanism of the central stalk subunits to proton translocation. In vivo, can only synthesize ATP although its ATP hydrolase activity can be activated artificially in vitro. With the subunit alpha (ATP5F1A), forms the catalytic core in the F(1) domain. This chain is ATP synthase F(1) complex catalytic subunit beta, mitochondrial, found in Rattus norvegicus (Rat).